A 439-amino-acid polypeptide reads, in one-letter code: S-layer protein (439 aa).

A signal peptide spans 1–30; the sequence is MKKNLRIVSAAAAALLAVAPIAATAMPVNA.

In terms of processing, glycosylated.

It localises to the secreted. The protein localises to the cell wall. The protein resides in the S-layer. Its function is as follows. The S-layer is a paracrystalline mono-layered assembly of proteins which coat the surface of bacteria. The chain is S-layer protein (slpH) from Lactobacillus helveticus (Lactobacillus suntoryeus).